The sequence spans 668 residues: E3 ubiquitin-protein ligase RNF139 (668 aa).

Ala-2 is subject to N-acetylalanine. 11 helical membrane passes run 51–71 (IGLQIFLRLLGIVVSSIVLIL), 85–105 (AFLLAATSVLVNYYAALHIDF), 125–145 (SLWMALIVLQLTFGIGYVTLL), 154–174 (LMILNILVPIIGLITELPLHI), 178–198 (VVLMSSLILIFNTVLVLAVKL), 293–313 (GMSAVISSIAHYLGLGILAFI), 323–343 (LGFVAPVLFFILALQTGLSGL), 356–376 (MCLLLTAVLHFIHGMTDPVLM), 390–410 (FPVLFVSACLFILPVLLSYVL), 420–440 (LFAVTAFCVELCLKVIVSLTV), and 470–490 (IIEFIFGVVMFGNGAYTMMFE). The segment at 547-586 (CAICYHEFTTSARITPCNHYFHALCLRKWLYIQDTCPMCH) adopts an RING-type; atypical zinc-finger fold. Positions 602 to 668 (SNNNGFIAPN…AAAEFNDDTD (67 aa)) are disordered. Residues 618 to 630 (EALREDAAGSDRE) show a composition bias toward basic and acidic residues. Acidic residues predominate over residues 631–641 (LNEDDSTDCDD). At Ser-636 the chain carries Phosphoserine. A phosphothreonine mark is found at Thr-637 and Thr-667.

In terms of assembly, interacts with VHL. Interacts with MHC class I and HM13. Component of SCAP-SREBP complex composed of SREBF2, SCAP and RNF139; the complex hampers the interaction between SCAP and SEC24B, thereby reducing SREBF2 proteolytic processing. Interacts with SREBF2 (via C-terminal domain). Interacts with SCAP; the interaction inhibits the interaction of SCAP with SEC24B and hampering the ER to Golgi transport of the SCAP-SREBP complex. Interacts with SEC24B. Interacts with INSIG1 and INSIG2. Interacts with EIF3F and EIF3H; the interaction leads to protein translation inhibitions in a ubiquitination-dependent manner. Interacts with XBP1 isoform 1; the interaction induces ubiquitination and degradation of XBP1 isoform 1. Interacts with AUP1, AMFR and UBE2G2; interaction with AUP1 facilitates interaction of RNF139 with ubiquitin-conjugating enzyme UBE2G2 and ubiquitin ligase AMFR/gp78, leading to sterol-induced ubiquitination of HMGCR and its subsequent proteasomal degradation. Post-translationally, autoubiquitinated. Ubiquitination is induced by sterol and leads to ist degradation via the ubiquitin-proteasome pathway.

It localises to the endoplasmic reticulum membrane. It catalyses the reaction S-ubiquitinyl-[E2 ubiquitin-conjugating enzyme]-L-cysteine + [acceptor protein]-L-lysine = [E2 ubiquitin-conjugating enzyme]-L-cysteine + N(6)-ubiquitinyl-[acceptor protein]-L-lysine.. It functions in the pathway protein modification; protein ubiquitination. Its function is as follows. E3-ubiquitin ligase; acts as a negative regulator of cell proliferation through mechanisms involving G2/M arrest and cell death. Required for MHC class I ubiquitination in cells expressing the cytomegalovirus protein US2 before dislocation from the endoplasmic reticulum (ER). Affects SREBP processing by hindering the SREBP-SCAP complex translocation from the ER to the Golgi, thereby reducing SREBF2 target gene expression. Involved in the sterol-accelerated degradation of HMGCR. This is achieved through binding to INSIG1 and/or INSIG2 at the ER membrane. In addition, interaction of RNF139 with AUP1 facilitates interaction of RNF139 with ubiquitin-conjugating enzyme UBE2G2 and ubiquitin ligase AMFR, leading to ubiquitination of HMGCR. The ubiquitinated HMGCR is then released from the ER by the complex into the cytosol for subsequent destruction. Required for INSIG1 ubiquitination. May be required for EIF3 complex ubiquitination. This chain is E3 ubiquitin-protein ligase RNF139, found in Mus musculus (Mouse).